Here is a 261-residue protein sequence, read N- to C-terminus: Non-homologous end joining protein Ku 1 (261 aa).

Residues 12-171 (SFSLVAIPVQ…LITLHYSDEV (160 aa)) form the Ku domain.

The protein belongs to the prokaryotic Ku family. As to quaternary structure, homodimer. Interacts with LigD.

Its function is as follows. With LigD forms a non-homologous end joining (NHEJ) DNA repair enzyme, which repairs dsDNA breaks with reduced fidelity. Binds linear dsDNA with 5'- and 3'- overhangs but not closed circular dsDNA nor ssDNA. Recruits and stimulates the ligase activity of LigD. This is Non-homologous end joining protein Ku 1 from Geotalea uraniireducens (strain Rf4) (Geobacter uraniireducens).